A 181-amino-acid polypeptide reads, in one-letter code: MIRDLEYYDSPILRKVAAPVTEITDELRQLVLDMSETMAFYKGVGLAAPQVGQSISLFIMGVERELEDGELVFCDFPRVFINPVITQKSEQLVYGNEGCLSIPGLRGEVARPDKITVSAKNLDGQQFSLALEGFLARIVMHETDHLHGVLYIDRMSDKDKTKQFKNNLEKIRRKYSILRGL.

The Fe cation site is built by cysteine 99 and histidine 141. Residue glutamate 142 is part of the active site. Histidine 145 serves as a coordination point for Fe cation.

Belongs to the polypeptide deformylase family. Fe(2+) is required as a cofactor.

The catalysed reaction is N-terminal N-formyl-L-methionyl-[peptide] + H2O = N-terminal L-methionyl-[peptide] + formate. In terms of biological role, removes the formyl group from the N-terminal Met of newly synthesized proteins. Requires at least a dipeptide for an efficient rate of reaction. N-terminal L-methionine is a prerequisite for activity but the enzyme has broad specificity at other positions. The sequence is that of Peptide deformylase from Chlamydia trachomatis serovar A (strain ATCC VR-571B / DSM 19440 / HAR-13).